The sequence spans 202 residues: Probable cobalt-precorrin-6B C(15)-methyltransferase (decarboxylating) (202 aa).

Residues threonine 29, 53–57, aspartate 77, and valine 106 each bind S-adenosyl-L-methionine; that span reads GCGSG.

The protein belongs to the methyltransferase superfamily. Archaeal-type CbiT family.

The enzyme catalyses Co-precorrin-6B + S-adenosyl-L-methionine = Co-precorrin-7 + S-adenosyl-L-homocysteine + CO2. It functions in the pathway cofactor biosynthesis; adenosylcobalamin biosynthesis; cob(II)yrinate a,c-diamide from sirohydrochlorin (anaerobic route): step 8/10. Its function is as follows. Catalyzes the methylation of C-15 in cobalt-precorrin-6B followed by the decarboxylation of C-12 to form cobalt-precorrin-7. This is Probable cobalt-precorrin-6B C(15)-methyltransferase (decarboxylating) from Thermoplasma acidophilum (strain ATCC 25905 / DSM 1728 / JCM 9062 / NBRC 15155 / AMRC-C165).